The sequence spans 621 residues: GPI-anchor transamidase component GPAA1 (621 aa).

The Cytoplasmic segment spans residues 2–19 (GLLSDPVRRRALARLVLR). A helical transmembrane segment spans residues 20-41 (LNAPLCVLSYVAGIAWFLALVF). The Lumenal portion of the chain corresponds to 42 to 370 (PPLTQRTYMS…LLPGLSRFVS (329 aa)). Residues Tyr49 and Ser51 each coordinate a 2-acyl-6-[6-phosphoethanolamine-alpha-D-mannosyl-(1-&gt;2)-6-phosphoethanolamine-alpha-D-mannosyl-(1-&gt;6)-2-phosphoethanolamine-alpha-D-mannosyl-(1-&gt;4)-alpha-D-glucosaminyl]-1-(1-radyl,2-acyl-sn-glycero-3-phospho)-1D-myo-inositol. Asn203 is a glycosylation site (N-linked (GlcNAc...) asparagine). Cys259 and Cys266 are joined by a disulfide. A 2-acyl-6-[6-phosphoethanolamine-alpha-D-mannosyl-(1-&gt;2)-6-phosphoethanolamine-alpha-D-mannosyl-(1-&gt;6)-2-phosphoethanolamine-alpha-D-mannosyl-(1-&gt;4)-alpha-D-glucosaminyl]-1-(1-radyl,2-acyl-sn-glycero-3-phospho)-1D-myo-inositol contacts are provided by His354, Gln355, and Ser356. Residue Gln355 participates in Mg(2+) binding. The helical transmembrane segment at 371-393 (IGLYMPAVGFLLLVLGLKALELW) threads the bilayer. Over 394 to 425 (MQLHEAGMGLEEPGGAPGPSVPLPPSQGVGLA) the chain is Cytoplasmic. The helical transmembrane segment at 426–450 (SLVAPLLISQAMGLALYVLPVLGQH) threads the bilayer. Topologically, residues 451 to 462 (VATQHFPVAEAE) are lumenal. The chain crosses the membrane as a helical span at residues 463–483 (AVVLTLLAIYAAGLALPHNTH). Over 484-495 (RVVSTQAPDRGW) the chain is Cytoplasmic. Transmembrane regions (helical) follow at residues 496 to 519 (MALK…TNFS) and 520 to 536 (LGFL…ALAK). Residues 537–540 (PHGP) lie on the Cytoplasmic side of the membrane. The helical transmembrane segment at 541–563 (RTLYAALLVLTSPAATLLGSLFL) threads the bilayer. Over 564 to 597 (WRELQEAPLSLAEGWQLFLAALAQGVLEHHTYGA) the chain is Lumenal. The helical transmembrane segment at 598–619 (LLFPLLSLGLYPCWLLFWNVLF) threads the bilayer. The Cytoplasmic segment spans residues 620–621 (WK).

As to quaternary structure, heteropentamer. Part of the GPI-anchor transamidase complex, consisting of PIGK, PIGT, PIGS, PIGU and GAA1. Interacts with PIGK. Ubiquitously expressed in fetal and adult tissues. Expressed at higher levels in fetal tissues than adult tissues.

It localises to the endoplasmic reticulum membrane. It functions in the pathway glycolipid biosynthesis; glycosylphosphatidylinositol-anchor biosynthesis. Its function is as follows. Component of the glycosylphosphatidylinositol-anchor (GPI-anchor) transamidase (GPI-T) complex that catalyzes the formation of the linkage between a proprotein and a GPI-anchor and participates in GPI anchored protein biosynthesis. Binds GPI-anchor. The polypeptide is GPI-anchor transamidase component GPAA1 (Homo sapiens (Human)).